Reading from the N-terminus, the 695-residue chain is UvrABC system protein B (695 aa).

A Helicase ATP-binding domain is found at 31-414 (EGIESGLSFQ…EIQRSGQIAE (384 aa)). Residue 44 to 51 (GVTGSGKT) participates in ATP binding. The short motif at 97 to 120 (YYDYYQPEAYVPSRDLFIEKDSSI) is the Beta-hairpin element. The Helicase C-terminal domain occupies 435-601 (QVDDLMSEVS…GVNKRIKDLI (167 aa)). Positions 632-667 (AKEIQRLEKSMLEAARNMEFEQAAQYRDEIKNLRSK) constitute a UVR domain.

The protein belongs to the UvrB family. In terms of assembly, forms a heterotetramer with UvrA during the search for lesions. Interacts with UvrC in an incision complex.

The protein localises to the cytoplasm. Functionally, the UvrABC repair system catalyzes the recognition and processing of DNA lesions. A damage recognition complex composed of 2 UvrA and 2 UvrB subunits scans DNA for abnormalities. Upon binding of the UvrA(2)B(2) complex to a putative damaged site, the DNA wraps around one UvrB monomer. DNA wrap is dependent on ATP binding by UvrB and probably causes local melting of the DNA helix, facilitating insertion of UvrB beta-hairpin between the DNA strands. Then UvrB probes one DNA strand for the presence of a lesion. If a lesion is found the UvrA subunits dissociate and the UvrB-DNA preincision complex is formed. This complex is subsequently bound by UvrC and the second UvrB is released. If no lesion is found, the DNA wraps around the other UvrB subunit that will check the other stand for damage. The polypeptide is UvrABC system protein B (Nitrosomonas europaea (strain ATCC 19718 / CIP 103999 / KCTC 2705 / NBRC 14298)).